We begin with the raw amino-acid sequence, 291 residues long: N-acetylmannosamine kinase (291 aa).

ATP-binding positions include 5–12 and 132–139; these read AIDIGGTK and GVGGGVVS. The Zn(2+) site is built by His156, Cys166, Cys168, and Cys173.

Belongs to the ROK (NagC/XylR) family. NanK subfamily. As to quaternary structure, homodimer.

The catalysed reaction is an N-acyl-D-mannosamine + ATP = an N-acyl-D-mannosamine 6-phosphate + ADP + H(+). It functions in the pathway amino-sugar metabolism; N-acetylneuraminate degradation; D-fructose 6-phosphate from N-acetylneuraminate: step 2/5. In terms of biological role, catalyzes the phosphorylation of N-acetylmannosamine (ManNAc) to ManNAc-6-P. The polypeptide is N-acetylmannosamine kinase (Escherichia coli (strain 55989 / EAEC)).